The following is a 485-amino-acid chain: Chitin synthase regulator 2 (485 aa).

Sel1-like repeat units follow at residues 164–202 (PDAQ…KHGH), 203–238 (PDAC…VGLH), 239–275 (PGAM…EHAT), 279–316 (PHAL…ELGY), 317–353 (APSA…QQDH), 354–391 (KDAC…ELGL), and 392–427 (AKAQ…EGGD). The disordered stretch occupies residues 460–485 (AANLAQRSGSGSGASGKDGKDGCLIM). A compositionally biased stretch (basic and acidic residues) spans 476–485 (KDGKDGCLIM). Cysteine methyl ester is present on cysteine 482. Cysteine 482 carries the S-farnesyl cysteine lipid modification. Residues 483-485 (LIM) constitute a propeptide, removed in mature form.

Belongs to the SKT5 family.

It is found in the cell membrane. Functionally, activator of the chitin synthase CHS3 which polymerizes chitin, a structural polymer of the fungal cell wall. Chitin produced by CHS3 is deacetylated to chitosan, which helps to maintain cell wall integrity, anchor melanin, and offers an advantage during infection, as chitosan is less readily detected by host immunosurveillance. This is Chitin synthase regulator 2 from Cryptococcus neoformans var. grubii serotype A (strain H99 / ATCC 208821 / CBS 10515 / FGSC 9487) (Filobasidiella neoformans var. grubii).